A 137-amino-acid chain; its full sequence is Putative pre-16S rRNA nuclease (137 aa).

The protein belongs to the YqgF nuclease family.

It localises to the cytoplasm. Functionally, could be a nuclease involved in processing of the 5'-end of pre-16S rRNA. In Bacillus cytotoxicus (strain DSM 22905 / CIP 110041 / 391-98 / NVH 391-98), this protein is Putative pre-16S rRNA nuclease.